A 202-amino-acid chain; its full sequence is Adenosylcobalamin/alpha-ribazole phosphatase (202 aa).

The active-site Tele-phosphohistidine intermediate is His-8. Glu-81 acts as the Proton donor/acceptor in catalysis.

This sequence belongs to the phosphoglycerate mutase family.

It catalyses the reaction adenosylcob(III)alamin 5'-phosphate + H2O = adenosylcob(III)alamin + phosphate. The catalysed reaction is alpha-ribazole 5'-phosphate + H2O = alpha-ribazole + phosphate. It participates in nucleoside biosynthesis; alpha-ribazole biosynthesis; alpha-ribazole from 5,6-dimethylbenzimidazole: step 2/2. In terms of biological role, catalyzes the conversion of adenosylcobalamin 5'-phosphate to adenosylcobalamin (vitamin B12); involved in the assembly of the nucleotide loop of cobalamin. Also catalyzes the hydrolysis of the phospho group from alpha-ribazole 5'-phosphate to form alpha-ribazole. The sequence is that of Adenosylcobalamin/alpha-ribazole phosphatase (cobC) from Salmonella typhi.